Reading from the N-terminus, the 55-residue chain is MAKSGRDKIKLESTAGTGHFYTTTKNKRTTPEKMAIMKFDPKVRKHVEYKETKIK.

Over residues 1 to 11 (MAKSGRDKIKL) the composition is skewed to basic and acidic residues. A disordered region spans residues 1–28 (MAKSGRDKIKLESTAGTGHFYTTTKNKR). The segment covering 14–24 (TAGTGHFYTTT) has biased composition (polar residues).

Belongs to the bacterial ribosomal protein bL33 family.

This chain is Large ribosomal subunit protein bL33, found in Janthinobacterium sp. (strain Marseille) (Minibacterium massiliensis).